The chain runs to 382 residues: Alkanesulfonate monooxygenase (382 aa).

It belongs to the SsuD family.

It catalyses the reaction an alkanesulfonate + FMNH2 + O2 = an aldehyde + FMN + sulfite + H2O + 2 H(+). In terms of biological role, catalyzes the desulfonation of aliphatic sulfonates. The protein is Alkanesulfonate monooxygenase of Pseudomonas putida (strain W619).